A 143-amino-acid polypeptide reads, in one-letter code: Actinoxanthin (143 aa).

The first 33 residues, 1–33 (MSLRHMSRRASRFGVVAVASIGLAAAAQSVAFA), serve as a signal peptide directing secretion. 2 disulfide bridges follow: cysteine 69/cysteine 78 and cysteine 119/cysteine 124.

This sequence belongs to the neocarzinostatin family.

Functionally, binds non-covalently to a chromophore which is the cytotoxic and mutagenic component of the antibiotic. The chromophore binds to DNA as a weak intercalator and causes single- and double-strand breaks. The sequence is that of Actinoxanthin (axnA) from Streptomyces globisporus.